Reading from the N-terminus, the 270-residue chain is Small ribosomal subunit protein eS1 (270 aa).

2 disordered regions span residues 1-20 (MAVG…SKKK) and 238-270 (GGGK…QESV).

This sequence belongs to the eukaryotic ribosomal protein eS1 family. In terms of assembly, component of the small ribosomal subunit. Mature ribosomes consist of a small (40S) and a large (60S) subunit. The 40S subunit contains about 33 different proteins and 1 molecule of RNA (18S). The 60S subunit contains about 49 different proteins and 3 molecules of RNA (28S, 5.8S and 5S).

Its subcellular location is the cytoplasm. This Culex quinquefasciatus (Southern house mosquito) protein is Small ribosomal subunit protein eS1.